Here is an 80-residue protein sequence, read N- to C-terminus: Growth factor (80 aa).

Residues 1–19 form the signal peptide; that stretch reads MATRNLVASLLCIMYAVHA. Residues 29-73 form the EGF-like domain; it reads HVKVCNHDYENYCLNNGTCFTIALDNVSITPFCVCRINYEGSRCQ. 3 disulfide bridges follow: Cys33-Cys47, Cys41-Cys61, and Cys63-Cys72. 2 N-linked (GlcNAc...) asparagine; by host glycosylation sites follow: Asn44 and Asn54.

The protein resides in the secreted. In Oryctolagus cuniculus (Rabbit), this protein is Growth factor.